The primary structure comprises 670 residues: G-protein coupled receptor moody (670 aa).

The Extracellular segment spans residues 1–40 (MSDETTISLEDGYPPLEALTTMVPPADATGFSQSLLTFAA). Residues 41–61 (VMTFLIMIVGICGNLLTVVAL) form a helical membrane-spanning segment. Residues 62-69 (LKCPKVRN) are Cytoplasmic-facing. A helical transmembrane segment spans residues 70-90 (VAAAFIISLCIADLLFCALVL). Topologically, residues 91–111 (PFQGLRFVQGTWRHGQVLCRL) are extracellular. Cysteine 109 and cysteine 188 are joined by a disulfide. Residues 112–132 (IPFIQYGNIGVSLLCIAMITI) traverse the membrane as a helical segment. Topologically, residues 133–152 (NRYVMITHHGLYARIYKRHW) are cytoplasmic. The helical transmembrane segment at 153–173 (IAVMIAACWLFSYGMQLPTLL) threads the bilayer. Over 174 to 202 (GEWGRFGYDSRLQTCSIMTDDHGHSSKTT) the chain is Extracellular. The helical transmembrane segment at 203 to 223 (LFITAFVIPCLVIIACYAKIF) threads the bilayer. The Cytoplasmic segment spans residues 224-313 (WVVHKSEQRL…AKRNEWRITK (90 aa)). The disordered stretch occupies residues 258–302 (LPSGAECQPSNRVSSDSSSSFSIDVPETAPSGKQQPTRVKDQREV). Residues 267–279 (SNRVSSDSSSSFS) are compositionally biased toward low complexity. The chain crosses the membrane as a helical span at residues 314–334 (MVLAIFLSFVVCYLPITIVKV). Topologically, residues 335–345 (ADKNVEHPSLH) are extracellular. Residues 346-366 (ICSYILLYLSACINPIIYVIM) form a helical membrane-spanning segment. Residues 367-670 (NKQYRKAYKT…LTAKMKFPKD (304 aa)) are Cytoplasmic-facing. Disordered stretches follow at residues 461 to 490 (DLIS…GSNS), 562 to 622 (ELPP…YMNV), and 636 to 670 (TNAV…FPKD). Positions 564-584 (PPTPPATSAPTTPAPPPPSSP) are enriched in pro residues. Over residues 585 to 598 (LHPLSTDSSTTTIS) the composition is skewed to low complexity. Over residues 646–660 (GPANTSATVSISGSK) the composition is skewed to polar residues.

Belongs to the G-protein coupled receptor 1 family. As to expression, isoform A and isoform B are expressed in the head. Isoform B only is expressed in the body. Expressed in embryonic glial cells that are involved in ensheathment and insulation of the nervous system. Both isoforms are expressed in glia that insulate the larval and adult nervous system. Also expressed in the germ cells, the gut, and the heart.

Its subcellular location is the cell membrane. Its function is as follows. Isoform A and isoform B are required in glia to regulate the acute sensitivity to cocaine and to continuously maintain the proper blood-brain barrier (BBB) function. A moody-mediated signaling pathway functions in glia to regulate nervous system insulation and drug-related behaviors. Galphai and Galphao, and the regulator of G protein signaling, loco, are required in the surface glia to achieve effective insulation. The components function by regulating the cortical actin and thereby stabilizing the extended morphology of the surface glia, which in turn is necessary for the formation of septate junctions of sufficient length to achieve proper sealing of the nerve cord. The protein is G-protein coupled receptor moody of Drosophila melanogaster (Fruit fly).